The chain runs to 347 residues: Protein RecA (347 aa).

66 to 73 (GPESSGKT) contacts ATP.

The protein belongs to the RecA family.

The protein localises to the cytoplasm. Can catalyze the hydrolysis of ATP in the presence of single-stranded DNA, the ATP-dependent uptake of single-stranded DNA by duplex DNA, and the ATP-dependent hybridization of homologous single-stranded DNAs. It interacts with LexA causing its activation and leading to its autocatalytic cleavage. The chain is Protein RecA from Allochromatium vinosum (Chromatium vinosum).